The chain runs to 217 residues: Probable GTP-binding protein EngB (217 aa).

Residues 33–217 (GPTEIAFAGR…RAAIELAVAR (185 aa)) form the EngB-type G domain. GTP-binding positions include 41–48 (GRSNVGKS), 68–72 (GRTQE), 95–98 (DMPG), 162–165 (TKTD), and 196–198 (TSS). 2 residues coordinate Mg(2+): Ser48 and Thr70.

It belongs to the TRAFAC class TrmE-Era-EngA-EngB-Septin-like GTPase superfamily. EngB GTPase family. Mg(2+) serves as cofactor.

In terms of biological role, necessary for normal cell division and for the maintenance of normal septation. The protein is Probable GTP-binding protein EngB of Sinorhizobium medicae (strain WSM419) (Ensifer medicae).